The chain runs to 949 residues: MAM domain-containing glycosylphosphatidylinositol anchor protein 2 (949 aa).

An N-terminal signal peptide occupies residues 1–25 (MDLVYGLVWLLTVLLEGISGQGVYA). 2 Ig-like domains span residues 27 to 127 (PTVR…IRVD) and 134 to 232 (PVVT…KMVS). Disulfide bonds link Cys-62–Cys-110 and Cys-159–Cys-216. Residues Asn-92, Asn-213, and Asn-237 are each glycosylated (N-linked (GlcNAc...) asparagine). Ig-like domains are found at residues 242–328 (PSIK…NIIV), 340–436 (PDPY…VNIS), 442–533 (PNLT…ALVQ), and 540–627 (PAVE…FLVT). Disulfide bonds link Cys-264–Cys-310 and Cys-359–Cys-417. N-linked (GlcNAc...) asparagine glycans are attached at residues Asn-434, Asn-443, Asn-504, Asn-610, and Asn-703. 2 cysteine pairs are disulfide-bonded: Cys-465-Cys-515 and Cys-561-Cys-611. In terms of domain architecture, Fibronectin type-III spans 638-738 (DTYNPVWQNR…TIRVIKYTGE (101 aa)). Residues 739–914 (FHCGFEDGNI…VSIAEGECAK (176 aa)) form the MAM domain. A lipid anchor (GPI-anchor amidated aspartate) is attached at Asp-924. Positions 925–949 (GAVGILVHIWLFPVIILISILSPRR) are cleaved as a propeptide — removed in mature form.

Interacts (through the Ig-like domains) with NLGN2.

The protein resides in the cell membrane. Its function is as follows. May be involved in cell-cell interactions. The polypeptide is MAM domain-containing glycosylphosphatidylinositol anchor protein 2 (Mdga2) (Mus musculus (Mouse)).